A 716-amino-acid polypeptide reads, in one-letter code: Putative cuticle collagen 99 (716 aa).

Disordered regions lie at residues 85–122 and 183–472; these read LPSSDSNTDDDDVAKSRRVRNSCMCPAGPPGERGPVGP and PPGP…SLVA. Triple-helical region stretches follow at residues 179–238, 265–298, and 302–330; these read GMPG…KGDR, LPGPPGPPGPPGPAGRDGRHGLKGDRGLPGFDGE, and GPKGETGSPGRDGIPGARGPPGERGEKGD. Over residues 266 to 277 the composition is skewed to pro residues; the sequence is PGPPGPPGPPGP. Basic and acidic residues predominate over residues 280-290; that stretch reads RDGRHGLKGDR. A compositionally biased stretch (pro residues) spans 349 to 358; sequence PGPPGPPGPP. Triple-helical region stretches follow at residues 385–411 and 422–467; these read GPPGEKGERGERGEPGDRGLPGAAGAA and GPPG…GRHG. Positions 389-401 are enriched in basic and acidic residues; that stretch reads EKGERGERGEPGD. A compositionally biased stretch (low complexity) spans 402 to 422; that stretch reads RGLPGAAGAANLLNGGKALVG. A compositionally biased stretch (basic and acidic residues) spans 429–444; it reads RDGRPGDKGEKGEQGL. Residue asparagine 474 is glycosylated (N-linked (GlcNAc...) asparagine). Residues 503-716 form a disordered region; sequence KNVIPGPPGP…GAETRPPVTD (214 aa). 3 triple-helical region regions span residues 507 to 557, 566 to 603, and 605 to 664; these read PGPP…QPGA, GPRGPPGLPGPPGEKGDLGPPGLPGQPGSLGLPGPPGP, and GLRG…PGLD. Over residues 568–577 the composition is skewed to pro residues; that stretch reads RGPPGLPGPP.

Belongs to the cuticular collagen family. Collagen polypeptide chains are complexed within the cuticle by disulfide bonds and other types of covalent cross-links.

Functionally, nematode cuticles are composed largely of collagen-like proteins. The cuticle functions both as an exoskeleton and as a barrier to protect the worm from its environment. In Caenorhabditis elegans, this protein is Putative cuticle collagen 99 (col-99).